The following is a 1034-amino-acid chain: Error-prone DNA polymerase (1034 aa).

Belongs to the DNA polymerase type-C family. DnaE2 subfamily.

Its subcellular location is the cytoplasm. It catalyses the reaction DNA(n) + a 2'-deoxyribonucleoside 5'-triphosphate = DNA(n+1) + diphosphate. Functionally, DNA polymerase involved in damage-induced mutagenesis and translesion synthesis (TLS). It is not the major replicative DNA polymerase. This chain is Error-prone DNA polymerase, found in Pseudomonas fluorescens (strain ATCC BAA-477 / NRRL B-23932 / Pf-5).